Reading from the N-terminus, the 234-residue chain is Leucyl/phenylalanyl-tRNA--protein transferase (234 aa).

The protein belongs to the L/F-transferase family.

The protein resides in the cytoplasm. It catalyses the reaction N-terminal L-lysyl-[protein] + L-leucyl-tRNA(Leu) = N-terminal L-leucyl-L-lysyl-[protein] + tRNA(Leu) + H(+). The enzyme catalyses N-terminal L-arginyl-[protein] + L-leucyl-tRNA(Leu) = N-terminal L-leucyl-L-arginyl-[protein] + tRNA(Leu) + H(+). The catalysed reaction is L-phenylalanyl-tRNA(Phe) + an N-terminal L-alpha-aminoacyl-[protein] = an N-terminal L-phenylalanyl-L-alpha-aminoacyl-[protein] + tRNA(Phe). In terms of biological role, functions in the N-end rule pathway of protein degradation where it conjugates Leu, Phe and, less efficiently, Met from aminoacyl-tRNAs to the N-termini of proteins containing an N-terminal arginine or lysine. In Citrobacter koseri (strain ATCC BAA-895 / CDC 4225-83 / SGSC4696), this protein is Leucyl/phenylalanyl-tRNA--protein transferase.